The following is a 169-amino-acid chain: E1B protein, small T-antigen (169 aa).

Belongs to the adenoviridae E1B 19 kDa protein family.

The sequence is that of E1B protein, small T-antigen from Canis lupus familiaris (Dog).